The primary structure comprises 641 residues: E3 ubiquitin-protein ligase TRIM47 (641 aa).

Residues Cys-9–Gln-58 form an RING-type zinc finger. Thr-72 bears the Phosphothreonine mark. The disordered stretch occupies residues Gln-81–Gln-123. Positions Pro-103–Pro-118 are enriched in pro residues. The B box-type zinc-finger motif lies at Leu-181 to Leu-221. Residues Cys-186, His-189, Cys-208, and His-213 each contribute to the Zn(2+) site. Residues Gln-305–Leu-325 adopt a coiled-coil conformation. Ser-393 is modified (phosphoserine). The interval Asp-396–Leu-416 is disordered. Positions Ser-413–Cys-634 constitute a B30.2/SPRY domain. A Phosphoserine modification is found at Ser-464. The residue at position 585 (Arg-585) is an Omega-N-methylarginine. A Phosphoserine modification is found at Ser-591.

Belongs to the TRIM/RBCC family. Expressed in hepatocytes, expression is increased in fatty livers.

The protein resides in the cytoplasm. Its subcellular location is the nucleus. The catalysed reaction is S-ubiquitinyl-[E2 ubiquitin-conjugating enzyme]-L-cysteine + [acceptor protein]-L-lysine = [E2 ubiquitin-conjugating enzyme]-L-cysteine + N(6)-ubiquitinyl-[acceptor protein]-L-lysine.. It participates in protein modification; protein ubiquitination. In terms of biological role, E3 ubiquitin-protein ligase that mediates the ubiquitination and proteasomal degradation of CYLD. The sequence is that of E3 ubiquitin-protein ligase TRIM47 from Mus musculus (Mouse).